A 66-amino-acid chain; its full sequence is Large ribosomal subunit protein bL31 (66 aa).

4 residues coordinate Zn(2+): cysteine 16, cysteine 18, cysteine 36, and cysteine 39.

The protein belongs to the bacterial ribosomal protein bL31 family. Type A subfamily. Part of the 50S ribosomal subunit. The cofactor is Zn(2+).

Its function is as follows. Binds the 23S rRNA. The polypeptide is Large ribosomal subunit protein bL31 (Bacillus licheniformis (strain ATCC 14580 / DSM 13 / JCM 2505 / CCUG 7422 / NBRC 12200 / NCIMB 9375 / NCTC 10341 / NRRL NRS-1264 / Gibson 46)).